The primary structure comprises 162 residues: Eukaryotic translation initiation factor 5 (162 aa).

The tract at residues 59–162 (PPNLNPAVQG…EKDRMDIFYE (104 aa)) is disordered. Residues 85–109 (GDTNGDTSQVDDQNESLEASVNENS) are compositionally biased toward polar residues. The span at 148-162 (DLEKREKDRMDIFYE) shows a compositional bias: basic and acidic residues.

Belongs to the eIF-2-beta/eIF-5 family.

Functionally, catalyzes the hydrolysis of GTP bound to the 40S ribosomal initiation complex (40S.mRNA.Met-tRNA[F].eIF-2.GTP) with the subsequent joining of a 60S ribosomal subunit resulting in the release of eIF-2 and the guanine nucleotide. The subsequent joining of a 60S ribosomal subunit results in the formation of a functional 80S initiation complex (80S.mRNA.Met-tRNA[F]). The sequence is that of Eukaryotic translation initiation factor 5 from Tribolium castaneum (Red flour beetle).